The primary structure comprises 364 residues: GTPase Obg (364 aa).

Residues 1 to 159 form the Obg domain; sequence MKFIDEARIE…RNLRLELKVL (159 aa). The interval 128-147 is disordered; that stretch reads IHFKSSTNRAPRQKTDGKAG. The OBG-type G domain occupies 160 to 334; it reads ADVGLLGMPN…LVHAIQEYLD (175 aa). GTP-binding positions include 166–173, 191–195, 213–216, 284–287, and 315–317; these read GMPNAGKS, FTTLH, DIPG, NKLD, and SAL. Ser173 and Thr193 together coordinate Mg(2+). Residues 340–364 form a disordered region; that stretch reads EDAAAAAPDQRLDPTLHNVDHDDQA. A compositionally biased stretch (basic and acidic residues) spans 349–364; sequence QRLDPTLHNVDHDDQA.

The protein belongs to the TRAFAC class OBG-HflX-like GTPase superfamily. OBG GTPase family. Monomer. The cofactor is Mg(2+).

It localises to the cytoplasm. Its function is as follows. An essential GTPase which binds GTP, GDP and possibly (p)ppGpp with moderate affinity, with high nucleotide exchange rates and a fairly low GTP hydrolysis rate. Plays a role in control of the cell cycle, stress response, ribosome biogenesis and in those bacteria that undergo differentiation, in morphogenesis control. This chain is GTPase Obg, found in Ralstonia pickettii (strain 12J).